The following is a 98-amino-acid chain: Large ribosomal subunit protein uL23 (98 aa).

The protein belongs to the universal ribosomal protein uL23 family. As to quaternary structure, part of the 50S ribosomal subunit. Contacts protein L29, and trigger factor when it is bound to the ribosome.

One of the early assembly proteins it binds 23S rRNA. One of the proteins that surrounds the polypeptide exit tunnel on the outside of the ribosome. Forms the main docking site for trigger factor binding to the ribosome. The polypeptide is Large ribosomal subunit protein uL23 (Borrelia garinii subsp. bavariensis (strain ATCC BAA-2496 / DSM 23469 / PBi) (Borreliella bavariensis)).